The primary structure comprises 496 residues: Ribose import ATP-binding protein RbsA (496 aa).

2 consecutive ABC transporter domains span residues 5–241 (LQMK…VGRE) and 252–496 (SPGE…VGGE). 37–44 (GENGAGKS) serves as a coordination point for ATP.

Belongs to the ABC transporter superfamily. Ribose importer (TC 3.A.1.2.1) family. In terms of assembly, the complex is composed of an ATP-binding protein (RbsA), two transmembrane proteins (RbsC) and a solute-binding protein (RbsB).

The protein localises to the cell membrane. It carries out the reaction D-ribose(out) + ATP + H2O = D-ribose(in) + ADP + phosphate + H(+). Part of the ABC transporter complex RbsABC involved in ribose import. Responsible for energy coupling to the transport system. The protein is Ribose import ATP-binding protein RbsA of Caldanaerobacter subterraneus subsp. tengcongensis (strain DSM 15242 / JCM 11007 / NBRC 100824 / MB4) (Thermoanaerobacter tengcongensis).